A 155-amino-acid chain; its full sequence is Vasotocin-neurophysin VT 1 (155 aa).

An N-terminal signal peptide occupies residues 1–20 (MPDSTIPLLCVLGLLALSSA). C21 and C26 are oxidised to a cystine. G29 is modified (glycine amide). Cystine bridges form between C41/C85, C44/C58, C52/C75, C59/C65, C92/C105, C99/C117, and C106/C111.

The protein belongs to the vasopressin/oxytocin family. Post-translationally, seven disulfide bonds are present in neurophysin.

The protein resides in the secreted. Functionally, vasotocin is probably an antidiuretic hormone. In Oncorhynchus masou (Cherry salmon), this protein is Vasotocin-neurophysin VT 1.